Reading from the N-terminus, the 282-residue chain is Biotin synthase (282 aa).

A Radical SAM core domain is found at 1-228 (MQEIFLCSIS…NARLMAAGGR (228 aa)). Cysteine 17, cysteine 21, and cysteine 24 together coordinate [4Fe-4S] cluster. Residues cysteine 61, cysteine 96, cysteine 154, and arginine 221 each coordinate [2Fe-2S] cluster.

This sequence belongs to the radical SAM superfamily. Biotin synthase family. In terms of assembly, homodimer. [4Fe-4S] cluster serves as cofactor. It depends on [2Fe-2S] cluster as a cofactor.

It carries out the reaction (4R,5S)-dethiobiotin + (sulfur carrier)-SH + 2 reduced [2Fe-2S]-[ferredoxin] + 2 S-adenosyl-L-methionine = (sulfur carrier)-H + biotin + 2 5'-deoxyadenosine + 2 L-methionine + 2 oxidized [2Fe-2S]-[ferredoxin]. The protein operates within cofactor biosynthesis; biotin biosynthesis; biotin from 7,8-diaminononanoate: step 2/2. Its function is as follows. Catalyzes the conversion of dethiobiotin (DTB) to biotin by the insertion of a sulfur atom into dethiobiotin via a radical-based mechanism. This is Biotin synthase from Helicobacter acinonychis (strain Sheeba).